The sequence spans 574 residues: Multidrug and toxin extrusion protein 1 (574 aa).

The Cytoplasmic segment spans residues 1-51; sequence MEGQAAETNHRAETVVRAELCLSAEQGPETTAYSQKRCLFLPMEVWQEAQQ. A helical transmembrane segment spans residues 52 to 72; it reads LLALAAPAFLSQLMIFLISIV. The Extracellular segment spans residues 73 to 86; sequence SSIFCGHLGKVELD. The chain crosses the membrane as a helical span at residues 87–107; sequence AVSLAITIINITGVAVGTGLA. At 108-133 the chain is on the cytoplasmic side; it reads GACDTLISQTFGGSNLKLVGIILQRG. The helical transmembrane segment at 134-154 threads the bilayer; sequence ILILLLFCFPCWALLINTESI. Topologically, residues 155–168 are extracellular; sequence LLLFRQDPEVSKLT. The chain crosses the membrane as a helical span at residues 169–189; sequence QIYVLIFLPALPAAFLYQLLA. Topologically, residues 190-204 are cytoplasmic; the sequence is KYLQNQGIIYPQVLT. The helical transmembrane segment at 205–225 threads the bilayer; sequence GFIANIFNALFNYILLYVLGL. Residues 226–230 are Extracellular-facing; that stretch reads GVMGS. A helical membrane pass occupies residues 231–251; that stretch reads ACANTVSQFIQMILLFLYIVW. Residues 252-271 are Cytoplasmic-facing; sequence RRLYADTWGGWSQACFEEWG. Residues 272-291 traverse the membrane as a helical segment; the sequence is AFIRLAVASMLMLCIEWWAF. The Extracellular portion of the chain corresponds to 292 to 309; sequence EISMFLAGVLGMVDLAAQ. A helical transmembrane segment spans residues 310–330; the sequence is AIIYQVAIVVYLIPLGLCIAG. The Cytoplasmic segment spans residues 331 to 350; sequence SIRVGHGLGAGNTEQAKRSA. A helical transmembrane segment spans residues 351 to 371; it reads LVVLCMTELCALLSGILLATL. Residues 372–384 lie on the Extracellular side of the membrane; that stretch reads KDVVAYIFTSDPN. The helical transmembrane segment at 385-405 threads the bilayer; that stretch reads IVALVSYVLPVYSACLLFDAC. Topologically, residues 406 to 430 are cytoplasmic; the sequence is VAACGGILRGSGKLKVGAISHTVGY. A helical membrane pass occupies residues 431–451; the sequence is YVIGLPLGISLMFAAKLGIIG. Residues 452–453 are Extracellular-facing; that stretch reads FW. The helical transmembrane segment at 454–472 threads the bilayer; it reads FGILACGIAQSIFLIIFVF. Topologically, residues 473-549 are cytoplasmic; the sequence is KIDWKRASEE…AGAAQHTRTL (77 aa). The interval 500 to 541 is disordered; that stretch reads KPSVYQEGCPTEQGDVDPGNVESIEFSQSSTSSEGTSPTPAG. The span at 521-538 shows a compositional bias: low complexity; the sequence is ESIEFSQSSTSSEGTSPT. The chain crosses the membrane as a helical span at residues 550 to 570; that stretch reads ILTRGLALGCAVGTLIIGIVI. Over 571-574 the chain is Extracellular; the sequence is RLSV.

Belongs to the multi antimicrobial extrusion (MATE) (TC 2.A.66.1) family.

The protein localises to the cell membrane. Its subcellular location is the apical cell membrane. The enzyme catalyses thiamine(out) + H(+)(in) = thiamine(in) + H(+)(out). The catalysed reaction is estrone 3-sulfate(in) + H(+)(out) = estrone 3-sulfate(out) + H(+)(in). It carries out the reaction creatinine(in) + H(+)(out) = creatinine(out) + H(+)(in). It catalyses the reaction agmatine(in) + H(+)(out) = agmatine(out) + H(+)(in). In terms of biological role, multidrug efflux pump that functions as a H(+)/organic cation antiporter. Mediates the secretion of cationic compounds including drugs, toxins and endogenous metabolites. Plays a role physiological role in the excretion of drugs, toxins and endogenous metabolites through the kidney and liver, into urine and bile respectively. In Xenopus tropicalis (Western clawed frog), this protein is Multidrug and toxin extrusion protein 1 (slc47a1).